We begin with the raw amino-acid sequence, 813 residues long: Ribonuclease R (813 aa).

The RNB domain maps to 260–587; sequence RVDLRDLPLV…LHRAIKYLLA (328 aa). Residue Lys-544 is modified to N6-acetyllysine. Residues 644-725 form the S1 motif domain; it reads GNVFKGVISS…DERKIDFSLI (82 aa). The segment at 733-813 is disordered; that stretch reads NVGKTAREKA…KRAAKKKVAE (81 aa). 2 stretches are compositionally biased toward basic and acidic residues: residues 737 to 749 and 761 to 774; these read TAREKAKKGDAGK and VNFEPDSAFRGEKK. Residues 775–791 are compositionally biased toward basic residues; sequence TKPKAAKKDARKAKKPS. Positions 792–801 are enriched in low complexity; it reads AKTQKIAAAT. Positions 802–813 are enriched in basic residues; the sequence is KAKRAAKKKVAE.

Belongs to the RNR ribonuclease family. RNase R subfamily. Monomer.

The protein localises to the cytoplasm. It carries out the reaction Exonucleolytic cleavage in the 3'- to 5'-direction to yield nucleoside 5'-phosphates.. Functionally, 3'-5' exoribonuclease that releases 5'-nucleoside monophosphates and is involved in maturation of structured RNAs. Required for the expression of virulence genes on the large plasmid of S.flexneri at the post-transcriptional level. This is Ribonuclease R from Shigella flexneri.